We begin with the raw amino-acid sequence, 676 residues long: UvrABC system protein B (676 aa).

One can recognise a Helicase ATP-binding domain in the interval 39–424 (RGILDGIPSQ…RGHIIEQIIR (386 aa)). Residue 52-59 (GTTGSGKT) coordinates ATP. A Beta-hairpin motif is present at residues 105–128 (YYDYYQPEAYIARSDTYIEKSLLI). A Helicase C-terminal domain is found at 441 to 604 (QIDDLLEEIR…ITPKPIIKPI (164 aa)). The segment at 611 to 631 (KEGAQEDSRPETQSTEDLESS) is disordered. Residues 629 to 664 (ESSIKQYEEAMYKAAQDFQFDEAAKYRDLMNAAKRQ) enclose the UVR domain.

It belongs to the UvrB family. Forms a heterotetramer with UvrA during the search for lesions. Interacts with UvrC in an incision complex.

The protein resides in the cytoplasm. The UvrABC repair system catalyzes the recognition and processing of DNA lesions. A damage recognition complex composed of 2 UvrA and 2 UvrB subunits scans DNA for abnormalities. Upon binding of the UvrA(2)B(2) complex to a putative damaged site, the DNA wraps around one UvrB monomer. DNA wrap is dependent on ATP binding by UvrB and probably causes local melting of the DNA helix, facilitating insertion of UvrB beta-hairpin between the DNA strands. Then UvrB probes one DNA strand for the presence of a lesion. If a lesion is found the UvrA subunits dissociate and the UvrB-DNA preincision complex is formed. This complex is subsequently bound by UvrC and the second UvrB is released. If no lesion is found, the DNA wraps around the other UvrB subunit that will check the other stand for damage. The protein is UvrABC system protein B of Chlamydia muridarum (strain MoPn / Nigg).